Here is a 487-residue protein sequence, read N- to C-terminus: NADH-quinone oxidoreductase subunit N (487 aa).

Transmembrane regions (helical) follow at residues 18–38, 44–64, 84–104, 116–136, 169–189, 211–231, 242–262, 277–297, 305–325, 333–353, 377–397, 410–430, and 457–477; these read LVPE…DLFV, VWTH…LATG, VMKT…WTYL, VLVL…SLLM, FVLG…VYGA, LLTG…AAPF, APAP…FGMA, WHLL…LMAI, MLAY…AGGG, MFYA…IIAL, AGLV…LGFW, DMLW…YYYL, and VLGV…PIMV.

Belongs to the complex I subunit 2 family. As to quaternary structure, NDH-1 is composed of 14 different subunits. Subunits NuoA, H, J, K, L, M, N constitute the membrane sector of the complex.

The protein localises to the cell inner membrane. It catalyses the reaction a quinone + NADH + 5 H(+)(in) = a quinol + NAD(+) + 4 H(+)(out). In terms of biological role, NDH-1 shuttles electrons from NADH, via FMN and iron-sulfur (Fe-S) centers, to quinones in the respiratory chain. The immediate electron acceptor for the enzyme in this species is believed to be ubiquinone. Couples the redox reaction to proton translocation (for every two electrons transferred, four hydrogen ions are translocated across the cytoplasmic membrane), and thus conserves the redox energy in a proton gradient. The chain is NADH-quinone oxidoreductase subunit N from Xanthomonas euvesicatoria pv. vesicatoria (strain 85-10) (Xanthomonas campestris pv. vesicatoria).